Consider the following 323-residue polypeptide: o-succinylbenzoate synthase (323 aa).

Catalysis depends on K134, which acts as the Proton donor. Mg(2+) is bound by residues D162, E191, and D214. K236 (proton acceptor) is an active-site residue.

It belongs to the mandelate racemase/muconate lactonizing enzyme family. MenC type 1 subfamily. It depends on a divalent metal cation as a cofactor.

The catalysed reaction is (1R,6R)-6-hydroxy-2-succinyl-cyclohexa-2,4-diene-1-carboxylate = 2-succinylbenzoate + H2O. The protein operates within quinol/quinone metabolism; 1,4-dihydroxy-2-naphthoate biosynthesis; 1,4-dihydroxy-2-naphthoate from chorismate: step 4/7. Its pathway is quinol/quinone metabolism; menaquinone biosynthesis. In terms of biological role, converts 2-succinyl-6-hydroxy-2,4-cyclohexadiene-1-carboxylate (SHCHC) to 2-succinylbenzoate (OSB). The protein is o-succinylbenzoate synthase of Yersinia pestis bv. Antiqua (strain Antiqua).